We begin with the raw amino-acid sequence, 494 residues long: Cytochrome P450 2A3 (494 aa).

Serine 131 carries the post-translational modification Phosphoserine. Lysine 379 carries the N6-acetyllysine modification. Cysteine 439 provides a ligand contact to heme.

This sequence belongs to the cytochrome P450 family. The cofactor is heme. In terms of tissue distribution, lung.

The protein localises to the endoplasmic reticulum membrane. It localises to the microsome membrane. The enzyme catalyses an organic molecule + reduced [NADPH--hemoprotein reductase] + O2 = an alcohol + oxidized [NADPH--hemoprotein reductase] + H2O + H(+). Its function is as follows. Cytochromes P450 are a group of heme-thiolate monooxygenases. In liver microsomes, this enzyme is involved in an NADPH-dependent electron transport pathway. It oxidizes a variety of structurally unrelated compounds, including steroids, fatty acids, and xenobiotics. In Rattus norvegicus (Rat), this protein is Cytochrome P450 2A3 (Cyp2a3).